The sequence spans 75 residues: RNA-binding protein KhpA (75 aa).

In terms of domain architecture, KH spans 29-75; the sequence is SIILELKVAPEDMGKVIGKQGRIAKAIRTVIKAAAVKENKRVVVEII.

The protein belongs to the KhpA RNA-binding protein family. In terms of assembly, forms a complex with KhpB.

Its subcellular location is the cytoplasm. Functionally, a probable RNA chaperone. Forms a complex with KhpB which binds to cellular RNA and controls its expression. Plays a role in peptidoglycan (PG) homeostasis and cell length regulation. The sequence is that of RNA-binding protein KhpA from Clostridium acetobutylicum (strain ATCC 824 / DSM 792 / JCM 1419 / IAM 19013 / LMG 5710 / NBRC 13948 / NRRL B-527 / VKM B-1787 / 2291 / W).